Reading from the N-terminus, the 268-residue chain is Orotidine 5'-phosphate decarboxylase (268 aa).

Substrate contacts are provided by residues aspartate 37, 59-61, 91-100, tyrosine 217, and arginine 235; these read KTH and DRKFADIGNT. The active-site Proton donor is the lysine 93.

It belongs to the OMP decarboxylase family.

The enzyme catalyses orotidine 5'-phosphate + H(+) = UMP + CO2. It functions in the pathway pyrimidine metabolism; UMP biosynthesis via de novo pathway; UMP from orotate: step 2/2. This Maudiozyma exigua (Yeast) protein is Orotidine 5'-phosphate decarboxylase (URA4).